A 110-amino-acid chain; its full sequence is Putative pterin-4-alpha-carbinolamine dehydratase (110 aa).

This sequence belongs to the pterin-4-alpha-carbinolamine dehydratase family.

The enzyme catalyses (4aS,6R)-4a-hydroxy-L-erythro-5,6,7,8-tetrahydrobiopterin = (6R)-L-erythro-6,7-dihydrobiopterin + H2O. The chain is Putative pterin-4-alpha-carbinolamine dehydratase from Vibrio vulnificus (strain CMCP6).